A 351-amino-acid chain; its full sequence is uncharacterized protein (351 aa).

It belongs to the glycosyltransferase group 1 family. Glycosyltransferase 4 subfamily.

This is an uncharacterized protein from Methanocaldococcus jannaschii (strain ATCC 43067 / DSM 2661 / JAL-1 / JCM 10045 / NBRC 100440) (Methanococcus jannaschii).